A 359-amino-acid chain; its full sequence is Alanine racemase (359 aa).

The Proton acceptor; specific for D-alanine role is filled by lysine 34. Lysine 34 is modified (N6-(pyridoxal phosphate)lysine). A substrate-binding site is contributed by arginine 129. Residue tyrosine 255 is the Proton acceptor; specific for L-alanine of the active site. Substrate is bound at residue methionine 303.

This sequence belongs to the alanine racemase family. It depends on pyridoxal 5'-phosphate as a cofactor.

The enzyme catalyses L-alanine = D-alanine. It functions in the pathway amino-acid biosynthesis; D-alanine biosynthesis; D-alanine from L-alanine: step 1/1. Functionally, catalyzes the interconversion of L-alanine and D-alanine. May also act on other amino acids. In Shigella dysenteriae serotype 1 (strain Sd197), this protein is Alanine racemase (alr).